Here is a 201-residue protein sequence, read N- to C-terminus: Recombination protein RecR (201 aa).

The segment at Cys-60–Cys-75 adopts a C4-type zinc-finger fold. A Toprim domain is found at Ser-83–Pro-178.

Belongs to the RecR family.

In terms of biological role, may play a role in DNA repair. It seems to be involved in an RecBC-independent recombinational process of DNA repair. It may act with RecF and RecO. In Rhodopseudomonas palustris (strain BisB5), this protein is Recombination protein RecR.